Consider the following 338-residue polypeptide: Ketol-acid reductoisomerase (NADP(+)) (338 aa).

The KARI N-terminal Rossmann domain maps to 1–181; that stretch reads MNVFYDKDAD…GGGRAGIIET (181 aa). Residues 24 to 27, Arg47, and Ser52 contribute to the NADP(+) site; that span reads YGSQ. His107 is an active-site residue. NADP(+) is bound at residue Gly133. In terms of domain architecture, KARI C-terminal knotted spans 182–327; sequence NFREETETDL…AKLRAMMPWI (146 aa). Residues Asp190, Glu194, Glu226, and Glu230 each contribute to the Mg(2+) site. Ser251 is a substrate binding site.

This sequence belongs to the ketol-acid reductoisomerase family. It depends on Mg(2+) as a cofactor.

It catalyses the reaction (2R)-2,3-dihydroxy-3-methylbutanoate + NADP(+) = (2S)-2-acetolactate + NADPH + H(+). It carries out the reaction (2R,3R)-2,3-dihydroxy-3-methylpentanoate + NADP(+) = (S)-2-ethyl-2-hydroxy-3-oxobutanoate + NADPH + H(+). Its pathway is amino-acid biosynthesis; L-isoleucine biosynthesis; L-isoleucine from 2-oxobutanoate: step 2/4. The protein operates within amino-acid biosynthesis; L-valine biosynthesis; L-valine from pyruvate: step 2/4. Involved in the biosynthesis of branched-chain amino acids (BCAA). Catalyzes an alkyl-migration followed by a ketol-acid reduction of (S)-2-acetolactate (S2AL) to yield (R)-2,3-dihydroxy-isovalerate. In the isomerase reaction, S2AL is rearranged via a Mg-dependent methyl migration to produce 3-hydroxy-3-methyl-2-ketobutyrate (HMKB). In the reductase reaction, this 2-ketoacid undergoes a metal-dependent reduction by NADPH to yield (R)-2,3-dihydroxy-isovalerate. This chain is Ketol-acid reductoisomerase (NADP(+)), found in Burkholderia ambifaria (strain MC40-6).